Reading from the N-terminus, the 126-residue chain is Small ribosomal subunit protein uS13 (126 aa).

The disordered stretch occupies residues 92-126 (HRRGLPVRGQRTKTNARTRKGPKKTVAGKKKATRK).

The protein belongs to the universal ribosomal protein uS13 family. Part of the 30S ribosomal subunit. Forms a loose heterodimer with protein S19. Forms two bridges to the 50S subunit in the 70S ribosome.

In terms of biological role, located at the top of the head of the 30S subunit, it contacts several helices of the 16S rRNA. In the 70S ribosome it contacts the 23S rRNA (bridge B1a) and protein L5 of the 50S subunit (bridge B1b), connecting the 2 subunits; these bridges are implicated in subunit movement. Contacts the tRNAs in the A and P-sites. The chain is Small ribosomal subunit protein uS13 from Deinococcus deserti (strain DSM 17065 / CIP 109153 / LMG 22923 / VCD115).